The chain runs to 400 residues: Cysteine desulfurase (400 aa).

Residues 71-72 (GT), asparagine 150, glutamine 178, and 198-200 (SGH) each bind pyridoxal 5'-phosphate. Lysine 201 is modified (N6-(pyridoxal phosphate)lysine). Threonine 236 provides a ligand contact to pyridoxal 5'-phosphate. Residue cysteine 324 is the Cysteine persulfide intermediate of the active site. Cysteine 324 provides a ligand contact to [2Fe-2S] cluster.

This sequence belongs to the class-V pyridoxal-phosphate-dependent aminotransferase family. NifS/IscS subfamily. As to quaternary structure, homodimer. Pyridoxal 5'-phosphate serves as cofactor.

It carries out the reaction (sulfur carrier)-H + L-cysteine = (sulfur carrier)-SH + L-alanine. In terms of biological role, catalyzes the removal of elemental sulfur atoms from cysteine to produce alanine. Seems to participate in the biosynthesis of the nitrogenase metalloclusters by providing the inorganic sulfur required for the Fe-S core formation. The sequence is that of Cysteine desulfurase from Nostoc sp. (strain PCC 7120 / SAG 25.82 / UTEX 2576).